A 400-amino-acid chain; its full sequence is Argininosuccinate synthase (400 aa).

Residues 10 to 18 (AYSGGVDTS) and Ala38 contribute to the ATP site. Residue Tyr89 coordinates L-citrulline. ATP is bound at residue Gly119. L-aspartate contacts are provided by Thr121, Asn125, and Asp126. Asn125 lines the L-citrulline pocket. Arg129, Ser177, Ser186, Glu262, and Tyr274 together coordinate L-citrulline.

The protein belongs to the argininosuccinate synthase family. Type 1 subfamily. Homotetramer.

It is found in the cytoplasm. It carries out the reaction L-citrulline + L-aspartate + ATP = 2-(N(omega)-L-arginino)succinate + AMP + diphosphate + H(+). It participates in amino-acid biosynthesis; L-arginine biosynthesis; L-arginine from L-ornithine and carbamoyl phosphate: step 2/3. The protein is Argininosuccinate synthase of Synechococcus elongatus (strain ATCC 33912 / PCC 7942 / FACHB-805) (Anacystis nidulans R2).